The sequence spans 258 residues: 5'-nucleotidase SurE (258 aa).

Residues aspartate 9, aspartate 10, serine 42, and asparagine 96 each contribute to the a divalent metal cation site.

The protein belongs to the SurE nucleotidase family. It depends on a divalent metal cation as a cofactor.

The protein resides in the cytoplasm. The enzyme catalyses a ribonucleoside 5'-phosphate + H2O = a ribonucleoside + phosphate. Nucleotidase that shows phosphatase activity on nucleoside 5'-monophosphates. The polypeptide is 5'-nucleotidase SurE (Campylobacter jejuni subsp. jejuni serotype O:6 (strain 81116 / NCTC 11828)).